A 302-amino-acid chain; its full sequence is Genome polyprotein (302 aa).

Residues 28 to 46 (ENLDTGKDSKKDTSGKGDK) show a composition bias toward basic and acidic residues. The interval 28 to 72 (ENLDTGKDSKKDTSGKGDKPQNSQTGQGSKEQTKIGTVSKDVNVG) is disordered. The span at 47-63 (PQNSQTGQGSKEQTKIG) shows a compositional bias: polar residues.

This sequence belongs to the potyviridae genome polyprotein family. Genome polyprotein of potyviruses undergoes post-translational proteolytic processing by the main proteinase NIa-pro resulting in the production of at least ten individual proteins. The P1 proteinase and the HC-pro cleave only their respective C-termini autocatalytically. 6K1 is essential for proper proteolytic separation of P3 from CI.

It localises to the virion. It carries out the reaction RNA(n) + a ribonucleoside 5'-triphosphate = RNA(n+1) + diphosphate. An RNA-dependent RNA polymerase that plays an essential role in the virus replication. Its function is as follows. Involved in aphid transmission, cell-to-cell and systemis movement, encapsidation of the viral RNA and in the regulation of viral RNA amplification. The polypeptide is Genome polyprotein (Watermelon mosaic virus II (isolate Australia)).